The following is a 377-amino-acid chain: N-acetyldiaminopimelate deacetylase (377 aa).

Aspartate 69 is an active-site residue. Catalysis depends on glutamate 128, which acts as the Proton acceptor.

The protein belongs to the peptidase M20A family. N-acetyldiaminopimelate deacetylase subfamily.

The enzyme catalyses N-acetyl-(2S,6S)-2,6-diaminopimelate + H2O = (2S,6S)-2,6-diaminopimelate + acetate. It functions in the pathway amino-acid biosynthesis; L-lysine biosynthesis via DAP pathway; LL-2,6-diaminopimelate from (S)-tetrahydrodipicolinate (acetylase route): step 3/3. Catalyzes the conversion of N-acetyl-diaminopimelate to diaminopimelate and acetate. This Streptococcus gordonii (strain Challis / ATCC 35105 / BCRC 15272 / CH1 / DL1 / V288) protein is N-acetyldiaminopimelate deacetylase.